A 669-amino-acid chain; its full sequence is MGTALVYHEDMTATRLLWDDPECEIERPERLTAALDRLRQRGLEQRCLRLSAREASEEELGLVHSPEYVSLVRETQVLGKEELQALSGQFDAIYFHPSTFHCARLAAGAGLQLVDAVLTGAVQNGLALVRPPGHHGQRAAANGFCVFNNVAIAAAHAKQKHGLHRILVVDWDVHHGQGIQYLFEDDPSVLYFSWHRYEHGRFWPFLRESDADAVGRGQGLGFTVNLPWNQVGMGNADYVAAFLHLLLPLAFEFDPELVLVSAGFDSAIGDPEGQMQATPECFAHLTQLLQVLAGGRVCAVLEGGYHLESLAESVCMTVQTLLGDPAPPLSGPMAPCQSALESIQSARAAQAPHWKSLQQQDVTAVPMSPSSHSPEGRPPPLLPGGPVCKAAASAPSSLLDQPCLCPAPSVRTAVALTTPDITLVLPPDVIQQEASALREETEAWARPHESLAREEALTALGKLLYLLDGMLDGQVNSGIAATPASAAAATLDVAVRRGLSHGAQRLLCVALGQLDRPPDLAHDGRSLWLNIRGKEAAALSMFHVSTPLPVMTGGFLSCILGLVLPLAYGFQPDLVLVALGPGHGLQGPHAALLAAMLRGLAGGRVLALLEENSTPQLAGILARVLNGEAPPSLGPSSVASPEDVQALMYLRGQLEPQWKMLQCHPHLVA.

Positions 1–323 (MGTALVYHED…VCMTVQTLLG (323 aa)) are histone deacetylase. Residue aspartate 20 participates in substrate binding. The short motif at 21–24 (PECE) is the Substrate specificity element. Histidine 135 functions as the Proton donor/acceptor in the catalytic mechanism. Residues aspartate 172, histidine 174, and aspartate 265 each contribute to the Zn(2+) site. Tyrosine 305 serves as a coordination point for substrate. Residues 361-373 (DVTAVPMSPSSHS) are compositionally biased toward polar residues. The interval 361–387 (DVTAVPMSPSSHSPEGRPPPLLPGGPV) is disordered. At serine 393 the chain carries Phosphoserine.

The protein belongs to the histone deacetylase family. HD type 2 subfamily. As to quaternary structure, interacts with HDAC3. Interacts with HDAC2 and NCOR2/SMRT. Interacts with HSPA8/HSC70. Interacts with MSH2. Widely expressed with high levels in liver and kidney.

The protein localises to the cytoplasm. Its subcellular location is the nucleus. It carries out the reaction N(8)-acetylspermidine + H2O = spermidine + acetate. It catalyses the reaction N-acetylputrescine + H2O = putrescine + acetate. The catalysed reaction is N-acetylcadaverine + H2O = cadaverine + acetate. The enzyme catalyses N(6)-acetyl-L-lysyl-[protein] + H2O = L-lysyl-[protein] + acetate. Polyamine deacetylase (PDAC), which acts preferentially on N(8)-acetylspermidine, and also on acetylcadaverine and acetylputrescine. Exhibits attenuated catalytic activity toward N(1),N(8)-diacetylspermidine and very low activity, if any, toward N(1)-acetylspermidine. Histone deacetylase activity has been observed in vitro. Has also been shown to be involved in MSH2 deacetylation. The physiological relevance of protein/histone deacetylase activity is unclear and could be very weak. May play a role in the promotion of late stages of autophagy, possibly autophagosome-lysosome fusion and/or lysosomal exocytosis in neuroblastoma cells. May play a role in homologous recombination. May promote DNA mismatch repair. The sequence is that of Polyamine deacetylase HDAC10 (HDAC10) from Homo sapiens (Human).